The chain runs to 237 residues: MTETKEEKVHKVFEKISPSYDRMNSVISFKLHVKWRKETMKLMRVQKGTNVLDVCCGTADWSIMMAEEIGPEGHVTGLDFSENMLKVGREKVTEADLHNVELIHGNAMELPFPDNSFDYVTIGFGLRNVPDYMQVLREMYRVLKPGGQLACIDTSQPNIPGWKQVFNAYFRYVMPVFGKFFAKSYKEYSWLQESTREFPGMARLAEMFQEAGFSYVRYISHSGGASATHFGFKKKEQ.

S-adenosyl-L-methionine is bound by residues Thr-58, Asp-79, and 106–107 (NA).

Belongs to the class I-like SAM-binding methyltransferase superfamily. MenG/UbiE family.

The enzyme catalyses a 2-demethylmenaquinol + S-adenosyl-L-methionine = a menaquinol + S-adenosyl-L-homocysteine + H(+). It functions in the pathway quinol/quinone metabolism; menaquinone biosynthesis; menaquinol from 1,4-dihydroxy-2-naphthoate: step 2/2. Its function is as follows. Methyltransferase required for the conversion of demethylmenaquinol (DMKH2) to menaquinol (MKH2). This chain is Demethylmenaquinone methyltransferase, found in Listeria monocytogenes serotype 4a (strain HCC23).